Consider the following 162-residue polypeptide: Small ribosomal subunit protein uS9 (162 aa).

This sequence belongs to the universal ribosomal protein uS9 family.

This Methylobacterium nodulans (strain LMG 21967 / CNCM I-2342 / ORS 2060) protein is Small ribosomal subunit protein uS9.